We begin with the raw amino-acid sequence, 232 residues long: Ubiquinone biosynthesis O-methyltransferase (232 aa).

Positions 36, 55, 76, and 120 each coordinate S-adenosyl-L-methionine.

The protein belongs to the methyltransferase superfamily. UbiG/COQ3 family.

The enzyme catalyses a 3-demethylubiquinol + S-adenosyl-L-methionine = a ubiquinol + S-adenosyl-L-homocysteine + H(+). It catalyses the reaction a 3-(all-trans-polyprenyl)benzene-1,2-diol + S-adenosyl-L-methionine = a 2-methoxy-6-(all-trans-polyprenyl)phenol + S-adenosyl-L-homocysteine + H(+). It functions in the pathway cofactor biosynthesis; ubiquinone biosynthesis. In terms of biological role, O-methyltransferase that catalyzes the 2 O-methylation steps in the ubiquinone biosynthetic pathway. This chain is Ubiquinone biosynthesis O-methyltransferase, found in Burkholderia ambifaria (strain MC40-6).